Here is a 657-residue protein sequence, read N- to C-terminus: UvrABC system protein B (657 aa).

Residues 29–416 (KLAEFQTNEQ…LSHNNVVEQL (388 aa)) form the Helicase ATP-binding domain. Position 42–49 (42–49 (GATGTGKT)) interacts with ATP. The short motif at 95–118 (YFDFYQPEAYLPAKGVYIEKSATV) is the Beta-hairpin element. The 163-residue stretch at 435–597 (QVEDLVSEII…KTPMTVQKPI (163 aa)) folds into the Helicase C-terminal domain. Residues 615-650 (AALIKQLTKEMKQAAANQNYELAIEIRDSIFELEKQ) form the UVR domain.

This sequence belongs to the UvrB family. Forms a heterotetramer with UvrA during the search for lesions. Interacts with UvrC in an incision complex.

It localises to the cytoplasm. Its function is as follows. The UvrABC repair system catalyzes the recognition and processing of DNA lesions. A damage recognition complex composed of 2 UvrA and 2 UvrB subunits scans DNA for abnormalities. Upon binding of the UvrA(2)B(2) complex to a putative damaged site, the DNA wraps around one UvrB monomer. DNA wrap is dependent on ATP binding by UvrB and probably causes local melting of the DNA helix, facilitating insertion of UvrB beta-hairpin between the DNA strands. Then UvrB probes one DNA strand for the presence of a lesion. If a lesion is found the UvrA subunits dissociate and the UvrB-DNA preincision complex is formed. This complex is subsequently bound by UvrC and the second UvrB is released. If no lesion is found, the DNA wraps around the other UvrB subunit that will check the other stand for damage. The chain is UvrABC system protein B from Mycoplasma pneumoniae (strain ATCC 29342 / M129 / Subtype 1) (Mycoplasmoides pneumoniae).